Consider the following 917-residue polypeptide: Serine/arginine repetitive matrix protein 1 (917 aa).

Met1 carries the N-acetylmethionine modification. The segment at 1 to 151 (MDAGFFRGTS…ASMKKQDEDK (151 aa)) is necessary for DNA and RNA-binding. The segment at 1–156 (MDAGFFRGTS…QDEDKDKRDK (156 aa)) is necessary for mRNA 3'-end cleavage and cytoplasmic accumulation. Citrulline is present on Arg7. In terms of domain architecture, PWI spans 27 to 126 (QLKFAECLEK…AGIPSAFLEL (100 aa)). Residue Lys127 forms a Glycyl lysine isopeptide (Lys-Gly) (interchain with G-Cter in SUMO2) linkage. Residues 139–170 (EKLASMKKQDEDKDKRDKEEKESSREKRERSR) are compositionally biased toward basic and acidic residues. The disordered stretch occupies residues 139–917 (EKLASMKKQD…MRKAQVSPQS (779 aa)). N6-acetyllysine is present on Lys140. Basic residues predominate over residues 171–207 (SPRRRKSRSPSPRRRSSPVRRERKRSHSRSPRHRTKS). Basic and acidic residues predominate over residues 214 to 234 (PEKKEKTPELPEPSVKVKEPS). Position 220 is a phosphothreonine (Thr220). Ser227 carries the post-translational modification Phosphoserine. Lys231 is covalently cross-linked (Glycyl lysine isopeptide (Lys-Gly) (interchain with G-Cter in SUMO1); alternate). Residue Lys231 forms a Glycyl lysine isopeptide (Lys-Gly) (interchain with G-Cter in SUMO2); alternate linkage. Phosphoserine is present on residues Ser234 and Ser240. Thr241 is subject to Phosphothreonine. The segment covering 246–275 (KVPKPEPIPEPKEPSPEKNSKKEKEKEKTR) has biased composition (basic and acidic residues). Residue Lys249 forms a Glycyl lysine isopeptide (Lys-Gly) (interchain with G-Cter in SUMO2) linkage. Ser260 carries the phosphoserine modification. Basic residues-rich tracts occupy residues 276-329 (PRSR…RTPP) and 336-351 (PRHR…RRRS). Residues 300-702 (RRHRSRSRSY…NKRHSPSPRP (403 aa)) form a necessary for speckles and matrix localization region. The span at 352-368 (SASLSGSSSSSSSSRSR) shows a compositional bias: low complexity. Ser389, Ser391, Ser393, and Ser402 each carry phosphoserine. Thr406 is modified (phosphothreonine). At Ser414 the chain carries Phosphoserine. Thr416 carries the post-translational modification Phosphothreonine. 4 positions are modified to phosphoserine: Ser420, Ser429, Ser431, and Ser436. Over residues 428 to 438 (VSVSPGRTSGK) the composition is skewed to polar residues. Residue Lys447 forms a Glycyl lysine isopeptide (Lys-Gly) (interchain with G-Cter in SUMO2) linkage. Phosphoserine is present on residues Ser450 and Ser452. A Glycyl lysine isopeptide (Lys-Gly) (interchain with G-Cter in SUMO2) cross-link involves residue Lys459. Phosphoserine is present on residues Ser463 and Ser465. Residue Lys472 forms a Glycyl lysine isopeptide (Lys-Gly) (interchain with G-Cter in SUMO2) linkage. Ser478 is subject to Phosphoserine. Residues 478-501 (SVQQRRQYRRQNQQSSSDSGSSSS) show a composition bias toward low complexity. Residues 503–518 (EDERPKRSHVKNGEVG) show a composition bias toward basic and acidic residues. Phosphoserine is present on residues Ser524, Ser526, Ser528, Ser530, Ser532, Ser563, and Ser565. The segment covering 557 to 574 (SGRRRRSPSPPPTRRRRS) has biased composition (basic residues). Thr569 carries the phosphothreonine modification. A phosphoserine mark is found at Ser574 and Ser576. A compositionally biased stretch (basic residues) spans 581–606 (PRRRRTPTPPPRRRTPSPPPRRRSPS). Residues Thr586, Thr588, and Thr595 each carry the phosphothreonine modification. Ser597 bears the Phosphoserine mark. Residues 607-619 (PRRYSPPIQRRYS) show a composition bias toward low complexity. Position 610 is a phosphotyrosine (Tyr610). Phosphoserine occurs at positions 611, 619, and 621. At Thr628 the chain carries Phosphothreonine. Ser630, Ser640, Ser642, Ser650, and Ser652 each carry phosphoserine. Residues 635–650 (PKRRASPSPPPKRRVS) are compositionally biased toward basic residues. Over residues 663–677 (TKRRSPSLSSKHRKG) the composition is skewed to basic residues. A compositionally biased stretch (pro residues) spans 699–713 (SPRPRAPQTSSPPPV). 6 positions are modified to phosphoserine: Ser708, Ser709, Ser718, Ser720, Ser726, and Ser728. Composition is skewed to low complexity over residues 714 to 732 (RRGA…PSTR), 749 to 772 (AASP…SPEP), and 782 to 799 (SPVQ…AVPV). Thr731 is subject to Phosphothreonine. Phosphoserine is present on residues Ser751, Ser753, Ser761, Ser765, Ser767, Ser769, Ser782, Ser786, Ser788, and Ser790. Thr791 is subject to Phosphothreonine. Ser794 and Ser804 each carry phosphoserine. Position 806 is a phosphothreonine (Thr806). Phosphoserine is present on residues Ser808, Ser810, and Ser815. Basic residues predominate over residues 822–847 (KKKKKKKDKKHKKDKKHKKHKKHKKE). The span at 850 to 879 (VAAAAAAAVTPAAIAAATTTLAQEEPVAAP) shows a compositional bias: low complexity. Lys882 participates in a covalent cross-link: Glycyl lysine isopeptide (Lys-Gly) (interchain with G-Cter in SUMO2). Thr885 bears the Phosphothreonine mark. Position 887 is a phosphoserine (Ser887). Over residues 895 to 905 (DLEKHLREKAL) the composition is skewed to basic and acidic residues. Ser914 is modified (phosphoserine).

Belongs to the splicing factor SR family. As to quaternary structure, identified in the spliceosome C complex. Found in a pre-mRNA splicing complex with SFRS4, SFRS5, SNRP70, SNRPA1, SRRM1 and SRRM2. Component of the minor spliceosome, which splices U12-type introns. Found in a pre-mRNA exonic splicing enhancer (ESE) complex with SNRP70, SNRPA1, SRRM1 and TRA2B/SFRS10. Found in a mRNA splicing-dependent exon junction complex (EJC) with DEK, PRPF8, NCBP1, RBM8A, RNPS1, SRRM1 and ALYREF/THOC4. Interacts with DDX39B, CPSF1, RBM8A, RNPS1, and ALYREF/THOC4. Seems to be a compound of RNA export complexes that are released from speckles in a ATP-dependent manner. Post-translationally, phosphorylated on multiple serine and threonine residues by DYRK3 during the G2-to-M transition, after the nuclear-envelope breakdown. Phosphorylation by DYRK3 promotes disassembly of nuclear speckles. Citrullinated by PADI4.

Part of pre- and post-splicing multiprotein mRNP complexes. As a component of the minor spliceosome, involved in the splicing of U12-type introns in pre-mRNAs. Involved in numerous pre-mRNA processing events. Promotes constitutive and exonic splicing enhancer (ESE)-dependent splicing activation by bridging together sequence-specific (SR family proteins, SFRS4, SFRS5 and TRA2B/SFRS10) and basal snRNP (SNRP70 and SNRPA1) factors of the spliceosome. Stimulates mRNA 3'-end cleavage independently of the formation of an exon junction complex. Binds both pre-mRNA and spliced mRNA 20-25 nt upstream of exon-exon junctions. Binds RNA and DNA with low sequence specificity and has similar preference for either double- or single-stranded nucleic acid substrates. This Pongo abelii (Sumatran orangutan) protein is Serine/arginine repetitive matrix protein 1 (SRRM1).